The primary structure comprises 462 residues: NEDD8-activating enzyme E1 regulatory subunit (462 aa).

It belongs to the ubiquitin-activating E1 family. ULA1 subfamily. As to quaternary structure, heterodimer of UBA3 and ULA1. The complex binds NEDD8 and UBC12.

Its pathway is protein modification; protein neddylation. Functionally, regulatory subunit of the dimeric UBA3-ULA1 E1 enzyme. E1 activates NEDD8/RUB1 by first adenylating its C-terminal glycine residue with ATP, thereafter linking this residue to the side chain of the catalytic cysteine, yielding a NEDD8-UBA3 thioester and free AMP. E1 finally transfers NEDD8 to the catalytic cysteine of UBC12. This chain is NEDD8-activating enzyme E1 regulatory subunit (ULA1), found in Saccharomyces cerevisiae (strain ATCC 204508 / S288c) (Baker's yeast).